The following is a 454-amino-acid chain: MIAEQHQAVVDSGASKKGAKVGFVSLGCPKNLVDSERILTQLRTEGYDVTNSYDDAELVIVNTCGFIDSAVQESLDTIGEALAANGKVLVTGCLGVKKDEIIELHPNVLGVTGPHAYDEVLAQVHEHVAKPEHNPFIDLVPPQGVKLTPKHYAYLKISEGCNHRCTFCIIPSMRGDLDSRPVGDVLGEAKRLVDSGVKELLVISQDTSAYGVDVKHKTDFWDGMPVKTHMQQLCEELAKQGVWIRLHYVYPYPHVDKIIPLMAEGKILPYLDIPFQHANKRILKLMKRPGSSDRVLERIAKWREICPELVIRSTFIVGFPGETEEEFEELLNFLEEAQLDRVGCFKYSPVEGATANALPDHVSDEVMEDRLQRFMAVQAKISSDKLQVRIGQEYLILVDEVNGLGIVGRSYMDAPEVDGKVYLSDDYDAKPGDQIWVQIIHADEHDVWGVRVED.

One can recognise an MTTase N-terminal domain in the interval 19 to 129; that stretch reads AKVGFVSLGC…VLAQVHEHVA (111 aa). [4Fe-4S] cluster-binding residues include Cys-28, Cys-64, Cys-93, Cys-161, Cys-165, and Cys-168. Residues 147–384 form the Radical SAM core domain; it reads LTPKHYAYLK…MAVQAKISSD (238 aa). The TRAM domain maps to 387–453; sequence QVRIGQEYLI…EHDVWGVRVE (67 aa).

Belongs to the methylthiotransferase family. RimO subfamily. [4Fe-4S] cluster serves as cofactor.

It is found in the cytoplasm. The enzyme catalyses L-aspartate(89)-[ribosomal protein uS12]-hydrogen + (sulfur carrier)-SH + AH2 + 2 S-adenosyl-L-methionine = 3-methylsulfanyl-L-aspartate(89)-[ribosomal protein uS12]-hydrogen + (sulfur carrier)-H + 5'-deoxyadenosine + L-methionine + A + S-adenosyl-L-homocysteine + 2 H(+). Catalyzes the methylthiolation of an aspartic acid residue of ribosomal protein uS12. In Colwellia psychrerythraea (strain 34H / ATCC BAA-681) (Vibrio psychroerythus), this protein is Ribosomal protein uS12 methylthiotransferase RimO.